A 239-amino-acid chain; its full sequence is Fatty acid metabolism regulator protein (239 aa).

The HTH gntR-type domain occupies 6 to 74 (KGPASFAEKY…HGKPTQVNNF (69 aa)). Positions 34–53 (ERELSELIGVTRTTLREVLQ) form a DNA-binding region, H-T-H motif.

Homodimer.

The protein resides in the cytoplasm. Multifunctional regulator of fatty acid metabolism. The polypeptide is Fatty acid metabolism regulator protein (Shewanella frigidimarina (strain NCIMB 400)).